The sequence spans 375 residues: Guanine nucleotide-binding protein subunit beta (375 aa).

WD repeat units follow at residues Gly-63–Asn-93, Leu-105–Asn-135, Gly-154–Asp-185, Gly-202–Asp-233, Gly-246–Asp-276, Gly-293–Asp-323, and Ser-339–Ala-369.

Belongs to the WD repeat G protein beta family. G proteins are composed of 3 units, alpha, beta and gamma.

Functionally, guanine nucleotide-binding proteins (G proteins) are involved as a modulator or transducer in various transmembrane signaling systems. The beta and gamma chains are required for the GTPase activity, for replacement of GDP by GTP, and for G protein-effector interaction. In Nicotiana tabacum (Common tobacco), this protein is Guanine nucleotide-binding protein subunit beta.